A 672-amino-acid chain; its full sequence is Hydroxyproline O-galactosyltransferase GALT5 (672 aa).

The Cytoplasmic portion of the chain corresponds to 1–28; it reads MKKPKLSKVEKIDKIDLFSSLWKQRSVR. Residues 29–49 traverse the membrane as a helical; Signal-anchor for type II membrane protein segment; that stretch reads VIMAIGFLYLVIVSVEIPLVF. At 50 to 672 the chain is on the lumenal side; that stretch reads KSWSSSSVPL…QNKPECCNMR (623 aa). Positions 191–392 constitute a Galectin domain; sequence KLMELPCGLT…DIDVHSVFVA (202 aa). Asn-306 and Asn-620 each carry an N-linked (GlcNAc...) asparagine glycan.

The protein belongs to the glycosyltransferase 31 family. Requires Mn(2+) as cofactor. As to expression, expressed in juvenile leaves, stems, cauline leaves and siliques.

It localises to the golgi apparatus membrane. Its pathway is protein modification; protein glycosylation. Functionally, possesses hydroxyproline O-galactosyltransferase activity. Transfers galactose from UDP-galactose to hydroxyproline residues in the arabinogalactan proteins (AGPs). Is specific for AGPs containing non-contiguous peptidyl hydroxyproline residues. Utilizes UDP-galactose solely as sugar donor. The addition of galactose onto the peptidyl hydroxyproline residues in AGP core proteins represents the first committed step in arabinogalactan polysaccharide addition. AGP glycans play essential roles in both vegetative and reproductive plant growth. The sequence is that of Hydroxyproline O-galactosyltransferase GALT5 from Arabidopsis thaliana (Mouse-ear cress).